An 87-amino-acid chain; its full sequence is uncharacterized protein (87 aa).

The 84-residue stretch at 4 to 87 (SIIEITNIKK…KPKGNITIKI (84 aa)) folds into the 2Fe-2S ferredoxin-type domain. Residues C38, C43, C46, and C75 each coordinate [2Fe-2S] cluster.

It depends on [2Fe-2S] cluster as a cofactor.

This is an uncharacterized protein from Buchnera aphidicola subsp. Acyrthosiphon pisum (strain APS) (Acyrthosiphon pisum symbiotic bacterium).